We begin with the raw amino-acid sequence, 112 residues long: Large ribosomal subunit protein mL53 (112 aa).

It belongs to the mitochondrion-specific ribosomal protein mL53 family. Component of the mitochondrial large ribosomal subunit (mt-LSU). Mature mammalian 55S mitochondrial ribosomes consist of a small (28S) and a large (39S) subunit. The 28S small subunit contains a 12S ribosomal RNA (12S mt-rRNA) and 30 different proteins. The 39S large subunit contains a 16S rRNA (16S mt-rRNA), a copy of mitochondrial valine transfer RNA (mt-tRNA(Val)), which plays an integral structural role, and 52 different proteins. mL53 is located at the L7/L12 stalk.

It localises to the mitochondrion. The polypeptide is Large ribosomal subunit protein mL53 (MRPL53) (Homo sapiens (Human)).